A 28-amino-acid polypeptide reads, in one-letter code: Dermaseptin-2.2TR (28 aa).

In terms of tissue distribution, expressed by the skin glands.

It localises to the secreted. In terms of biological role, has antimicrobial activity. The polypeptide is Dermaseptin-2.2TR (Phyllomedusa trinitatis (Trinidad leaf frog)).